A 161-amino-acid polypeptide reads, in one-letter code: Protein yippee-like B0546.4 (161 aa).

The 98-residue stretch at 14–111 folds into the Yippee domain; that stretch reads SLYGCVVCNT…IENANFEKIA (98 aa). Zn(2+) is bound by residues C18, C21, C74, and C77. The disordered stretch occupies residues 117–161; that stretch reads PLGEDRQEAPPAPNLEMSRYPLEAEKKSRPQYRTVSVSSSSSAEC. Over residues 151–161 the composition is skewed to low complexity; that stretch reads VSVSSSSSAEC.

This sequence belongs to the yippee family.

The chain is Protein yippee-like B0546.4 from Caenorhabditis elegans.